The following is a 171-amino-acid chain: Neudesin (171 aa).

A signal peptide spans 1-30; the sequence is MARPAPWWRLRLLAALVLALALVPVPSAWA. Positions 43-128 constitute a Cytochrome b5 heme-binding domain; sequence VRLFTEEELA…KELEALDDVF (86 aa). Position 135 is an N6-acetyllysine (lysine 135).

It belongs to the cytochrome b5 family. MAPR subfamily. Interacts with PINK1 and PARK7. As to expression, in the embryo, expressed most abundantly in brain and spinal cord. Widely expressed in adult tissues including brain, heart, lung and kidney. In brain, expressed in neurons but not in glial cells. In the hypothalamus is expressed primarily in the paraventricular nucleus (PVN), with lower levels of expression in the arcuate nucleus (ARC).

The protein resides in the secreted. Its subcellular location is the extracellular space. It is found in the mitochondrion. It localises to the endoplasmic reticulum. Its function is as follows. Acts as a neurotrophic factor in postnatal mature neurons, enhancing neuronal survival. Promotes cell proliferation and neurogenesis in undifferentiated neural pro-genitor cells at the embryonic stage and inhibits differentiation of astrocytes. Its neurotrophic activity is exerted via MAPK1/ERK2, MAPK3/ERK1 and AKT1/AKT pathways. Neurotrophic activity is enhanced by binding to heme. Also acts as an anorexigenic neurotrophic factor that contributes to energy balance. The chain is Neudesin from Mus musculus (Mouse).